The sequence spans 359 residues: MADKIKVMIVDDSALVRQVVAQALASDPGIEVTDVASDPIFALQKMKVRWPDVLVIDIEMPRMDGITFLKKIMAEHPTPTVICSSLAEKGAQATFEALAAGAVSIITKPKIGLKSFLEDASNDIVQAVRSAARANLRALSASANPAINRPKLSADAMLSTGSHRALERTTDQLVAIGTSTGGTQALEAVLTRLPATAPGIVIVQHMPEKFTAMFAERLDGLCQIEVREARNGDRVLPGLALIAPGGRHMMLKRNGAQYVVDVADGPLINRHKPSVDVLFRSVAKFAGANALGIIMTGMGDDGARGMKEMHDAGAKTIAQDESSCVVFGMPKEAIKLGGVDQTMPLQQIPGAIVGYGKSC.

The Response regulatory domain maps to 6–123 (KVMIVDDSAL…KSFLEDASND (118 aa)). D57 is modified (4-aspartylphosphate). The CheB-type methylesterase domain occupies 167 to 359 (ERTTDQLVAI…GAIVGYGKSC (193 aa)). Catalysis depends on residues S179, H205, and D301.

Belongs to the CheB family. Phosphorylated by CheA. Phosphorylation of the N-terminal regulatory domain activates the methylesterase activity.

Its subcellular location is the cytoplasm. The catalysed reaction is [protein]-L-glutamate 5-O-methyl ester + H2O = L-glutamyl-[protein] + methanol + H(+). The enzyme catalyses L-glutaminyl-[protein] + H2O = L-glutamyl-[protein] + NH4(+). Its function is as follows. Involved in chemotaxis. Part of a chemotaxis signal transduction system that modulates chemotaxis in response to various stimuli. Catalyzes the demethylation of specific methylglutamate residues introduced into the chemoreceptors (methyl-accepting chemotaxis proteins or MCP) by CheR. Also mediates the irreversible deamidation of specific glutamine residues to glutamic acid. The protein is Protein-glutamate methylesterase/protein-glutamine glutaminase 2 of Dechloromonas aromatica (strain RCB).